Consider the following 192-residue polypeptide: Xanthine phosphoribosyltransferase (192 aa).

Xanthine-binding residues include Leu-20 and Asn-27. 128-132 (AHGEA) is a binding site for 5-phospho-alpha-D-ribose 1-diphosphate. A xanthine-binding site is contributed by Lys-156.

This sequence belongs to the purine/pyrimidine phosphoribosyltransferase family. Xpt subfamily. Homodimer.

Its subcellular location is the cytoplasm. The enzyme catalyses XMP + diphosphate = xanthine + 5-phospho-alpha-D-ribose 1-diphosphate. It functions in the pathway purine metabolism; XMP biosynthesis via salvage pathway; XMP from xanthine: step 1/1. In terms of biological role, converts the preformed base xanthine, a product of nucleic acid breakdown, to xanthosine 5'-monophosphate (XMP), so it can be reused for RNA or DNA synthesis. The protein is Xanthine phosphoribosyltransferase of Lactobacillus gasseri (strain ATCC 33323 / DSM 20243 / BCRC 14619 / CIP 102991 / JCM 1131 / KCTC 3163 / NCIMB 11718 / NCTC 13722 / AM63).